We begin with the raw amino-acid sequence, 130 residues long: Ribosome-binding factor A (130 aa).

A disordered region spans residues 111–130 (RDLDDVGPGATSSDEDAEQR).

It belongs to the RbfA family. As to quaternary structure, monomer. Binds 30S ribosomal subunits, but not 50S ribosomal subunits or 70S ribosomes.

The protein localises to the cytoplasm. Its function is as follows. One of several proteins that assist in the late maturation steps of the functional core of the 30S ribosomal subunit. Associates with free 30S ribosomal subunits (but not with 30S subunits that are part of 70S ribosomes or polysomes). Required for efficient processing of 16S rRNA. May interact with the 5'-terminal helix region of 16S rRNA. In Xanthomonas oryzae pv. oryzae (strain MAFF 311018), this protein is Ribosome-binding factor A.